The primary structure comprises 228 residues: Lipoprotein-releasing system ATP-binding protein LolD (228 aa).

The ABC transporter domain occupies 6–228 (LRCKELSKSY…KNGILHKEQG (223 aa)). 42 to 49 (GASGSGKS) serves as a coordination point for ATP.

It belongs to the ABC transporter superfamily. Lipoprotein translocase (TC 3.A.1.125) family. As to quaternary structure, the complex is composed of two ATP-binding proteins (LolD) and two transmembrane proteins (LolC and LolE).

It is found in the cell inner membrane. Its function is as follows. Part of the ABC transporter complex LolCDE involved in the translocation of mature outer membrane-directed lipoproteins, from the inner membrane to the periplasmic chaperone, LolA. Responsible for the formation of the LolA-lipoprotein complex in an ATP-dependent manner. This Idiomarina loihiensis (strain ATCC BAA-735 / DSM 15497 / L2-TR) protein is Lipoprotein-releasing system ATP-binding protein LolD.